Here is a 332-residue protein sequence, read N- to C-terminus: FAD-dependent monooxygenase elcE (332 aa).

It belongs to the oxygen-dependent FAD-linked oxidoreductase family.

It participates in secondary metabolite biosynthesis. Functionally, FAD-dependent monooxygenase; part of the gene cluster that mediates the biosynthesis of elsinochrome C, a perelyenequinone phytotoxin structurally similar to cercosporin. The first step of elsinochrome C biosynthesis is performed by the polyketide synthase elcA which catalyzes the formation of nor-toralactone. The starter unit acyltransferase (SAT) domain of elcA initiates polyketide extension by the selective utilization of acetyl-CoA, which is elongated to the heptaketide in the beta-ketoacyl synthase (KS) domain by successive condensations with six malonyl units introduced by the malonyl acyltransferase (MAT) domain. The product template (PT) domain catalyzes C4-C9 and C2-C11 aldol cyclizations and dehydrations to a trihydroxynaphthalene, which is thought to be delivered to the thioesterase (TE) domain for product release. The bifunctional enzyme elcB then methylates nor-toralactone to toralactone before conducting an unusual oxidative aromatic ring opening. The next step in perylenequinone biosynthesis is an O-methylation at the nascent OH-6 of the elcB product performed by the O-methyltransferase elcD. The oxidative coupling of the two monomeric naphthol units in perylenequinone biosynthesis is catalyzed by the FAD-dependent monooxygenase elcE and the multicopper oxidase elcG. ElcG might catalyze the first intermolecular coupling in a regio- and stereo-selective manner via a phenol radical coupling mechanism and the elcE could forge the second C-C bond intramolecularly via a hydride transfer mechanism. The fasciclin domain-containing protein elcF might also play a role duting this step. The last piece of the puzzle in the biosynthesis of elsinochrome C is the additional annulation by enolate coupling to afford the dihydrobenzo(ghi)perylenequinone system, catalyzed by the FAD-dependent monooxygenase elcH. This is FAD-dependent monooxygenase elcE from Phaeosphaeria nodorum (strain SN15 / ATCC MYA-4574 / FGSC 10173) (Glume blotch fungus).